The following is a 394-amino-acid chain: Elongation factor Tu 2 (394 aa).

The 195-residue stretch at 10-204 (KPHVNVGTIG…ALDSYIPEPE (195 aa)) folds into the tr-type G domain. Residues 19 to 26 (GHVDHGKT) form a G1 region. A GTP-binding site is contributed by 19 to 26 (GHVDHGKT). A Mg(2+)-binding site is contributed by T26. A G2 region spans residues 60–64 (GITIS). Residues 81–84 (DCPG) are G3. Residues 81 to 85 (DCPGH) and 136 to 139 (NKCD) each bind GTP. The tract at residues 136–139 (NKCD) is G4. The G5 stretch occupies residues 174 to 176 (SAL).

Belongs to the TRAFAC class translation factor GTPase superfamily. Classic translation factor GTPase family. EF-Tu/EF-1A subfamily. Monomer.

It is found in the cytoplasm. The enzyme catalyses GTP + H2O = GDP + phosphate + H(+). Functionally, GTP hydrolase that promotes the GTP-dependent binding of aminoacyl-tRNA to the A-site of ribosomes during protein biosynthesis. This is Elongation factor Tu 2 from Photorhabdus laumondii subsp. laumondii (strain DSM 15139 / CIP 105565 / TT01) (Photorhabdus luminescens subsp. laumondii).